We begin with the raw amino-acid sequence, 344 residues long: Methionine import ATP-binding protein MetN (344 aa).

In terms of domain architecture, ABC transporter spans 2 to 241 (LELKQVGKVY…PQAEVTKAFV (240 aa)). Residue 38–45 (GYSGAGKS) participates in ATP binding.

Belongs to the ABC transporter superfamily. Methionine importer (TC 3.A.1.24) family. In terms of assembly, the complex is composed of two ATP-binding proteins (MetN), two transmembrane proteins (MetI) and a solute-binding protein (MetQ).

The protein resides in the cell membrane. It carries out the reaction L-methionine(out) + ATP + H2O = L-methionine(in) + ADP + phosphate + H(+). It catalyses the reaction D-methionine(out) + ATP + H2O = D-methionine(in) + ADP + phosphate + H(+). Part of the ABC transporter complex MetNIQ involved in methionine import. Responsible for energy coupling to the transport system. This chain is Methionine import ATP-binding protein MetN, found in Latilactobacillus sakei subsp. sakei (strain 23K) (Lactobacillus sakei subsp. sakei).